The following is a 671-amino-acid chain: MSLVKERKPKKPHYIPRPPGKPFKYKCFQCPFTCNEKSHLFNHMKYGLCKNSITVVTDQDRIVKNPKVNSTDQKQPSNEPFAKSPVPAINGLTGLESKTQHSVAREEAKENFDLKNEAKPHVEKTTVTKEVTLPPTAIIGQINKPPSLDGVMRPSAFIPVGEHRLKGTENIKIPELSSVSTEPAKGVHSIKSAFHSLPTPWKSGLVSPDFSHKSSIPRYIRPMISEYPPQFYSETGLPAVFSPYLFPQAECENPMLSVYSAPEQRPFLPHPLQASGLPLPKPINAPFEHYRLLQQFQQNPQLHYGFYRPTEHPYFSYGLKVPPVPSLSKEHTSQSVDSPTFIYPSSHPSRLYPLEGFQKLAEIQKETSPVPAKNLDSKSDSESVKMSPRAGSAATGSPGRPSPTNFTQNSQGHEGIFDLSTKSTSDKAGKDFTSGKAVRKSTDCQTTISREHSPCFRNDEIQSHSDCYSDDAAPHDSVAPLNLSKRPEVEDRAVFDTMHNSDSNDESVGFMEIQDLPLNLSVKDSGNNQKALCADERLLLPRQVTSSPNYHFIHTVDKRVPATTGVHSLGIIENCDEQKQSAAVALCQLATSSPGVPARGTEDEFSEKETVAPEQVHPRAPAAQETEADIGARGQKRTNSKEPGKSQSSNKKHKSVDSGRMFTLRKRPRVS.

A CCHC-type zinc finger spans residues 25–51 (YKCFQCPFTCNEKSHLFNHMKYGLCKN). Zn(2+) contacts are provided by Cys-27, Cys-30, His-43, and Cys-49. 3 disordered regions span residues 66-87 (PKVN…SPVP), 366-433 (ETSP…KDFT), and 592-671 (SSPG…PRVS). Polar residues-rich tracts occupy residues 67 to 78 (KVNSTDQKQPSN) and 402 to 412 (SPTNFTQNSQG).

The protein resides in the nucleus. Functionally, transcription factor involved in epidermis differentiation. In Xenopus tropicalis (Western clawed frog), this protein is Zinc finger protein 750 (znf750).